A 406-amino-acid polypeptide reads, in one-letter code: Peptidase T (406 aa).

Residue H82 participates in Zn(2+) binding. The active site involves D84. D142 serves as a coordination point for Zn(2+). E176 acts as the Proton acceptor in catalysis. 3 residues coordinate Zn(2+): E177, D199, and H381.

Belongs to the peptidase M20B family. Zn(2+) serves as cofactor.

It localises to the cytoplasm. It catalyses the reaction Release of the N-terminal residue from a tripeptide.. Functionally, cleaves the N-terminal amino acid of tripeptides. This Streptococcus agalactiae serotype III (strain NEM316) protein is Peptidase T.